The primary structure comprises 352 residues: Phosphate acyltransferase (352 aa).

This sequence belongs to the PlsX family. In terms of assembly, homodimer. Probably interacts with PlsY.

Its subcellular location is the cytoplasm. The enzyme catalyses a fatty acyl-[ACP] + phosphate = an acyl phosphate + holo-[ACP]. The protein operates within lipid metabolism; phospholipid metabolism. In terms of biological role, catalyzes the reversible formation of acyl-phosphate (acyl-PO(4)) from acyl-[acyl-carrier-protein] (acyl-ACP). This enzyme utilizes acyl-ACP as fatty acyl donor, but not acyl-CoA. In Brucella anthropi (strain ATCC 49188 / DSM 6882 / CCUG 24695 / JCM 21032 / LMG 3331 / NBRC 15819 / NCTC 12168 / Alc 37) (Ochrobactrum anthropi), this protein is Phosphate acyltransferase.